A 177-amino-acid chain; its full sequence is Large ribosomal subunit protein uL6 (177 aa).

It belongs to the universal ribosomal protein uL6 family. As to quaternary structure, part of the 50S ribosomal subunit.

This protein binds to the 23S rRNA, and is important in its secondary structure. It is located near the subunit interface in the base of the L7/L12 stalk, and near the tRNA binding site of the peptidyltransferase center. The protein is Large ribosomal subunit protein uL6 of Latilactobacillus sakei subsp. sakei (strain 23K) (Lactobacillus sakei subsp. sakei).